The chain runs to 505 residues: Protein ERGIC-53-like (505 aa).

An N-terminal signal peptide occupies residues 1–25; that stretch reads MLEIRGLSPSLCLLSLLLVLHGAER. Residues 26–438 lie on the Lumenal side of the membrane; that stretch reads SQPPPRRRFE…SGWLLGSSTC (413 aa). In terms of domain architecture, L-type lectin-like spans 32–254; that stretch reads RRFEYKLSFK…DVLSFLTFSL (223 aa). N-linked (GlcNAc...) asparagine glycosylation occurs at Asn-84. A disulfide bond links Cys-177 and Cys-216. Residues 439–459 form a helical membrane-spanning segment; sequence LHTSIFLFFLLLQTVGFFCYV. Residues 460 to 505 are Cytoplasmic-facing; it reads NFSRQELDKRLQEYLSTGSLSLEPALPITRTIGVLRRQPISPSMQA.

It is found in the endoplasmic reticulum-Golgi intermediate compartment membrane. In Mus musculus (Mouse), this protein is Protein ERGIC-53-like (Lman1l).